The chain runs to 430 residues: Phosphoserine aminotransferase 1, chloroplastic (430 aa).

A chloroplast-targeting transit peptide spans Met-1–Cys-51. Val-52 is subject to N-acetylvaline. Position 111 (Arg-111) interacts with L-glutamate. Residues Ala-145–Thr-146, Trp-171, Thr-221, Asp-241, and Gln-264 each bind pyridoxal 5'-phosphate. An N6-(pyridoxal phosphate)lysine modification is found at Lys-265. Asn-306–Thr-307 serves as a coordination point for pyridoxal 5'-phosphate.

Belongs to the class-V pyridoxal-phosphate-dependent aminotransferase family. SerC subfamily. As to quaternary structure, homodimer. Requires pyridoxal 5'-phosphate as cofactor. Ubiquitous, but expressed preferentially in light-grown roots and shoots. Detected in root meristems and in root tissues surrounding the vascular bundle.

Its subcellular location is the plastid. It localises to the chloroplast. It carries out the reaction O-phospho-L-serine + 2-oxoglutarate = 3-phosphooxypyruvate + L-glutamate. The enzyme catalyses 4-(phosphooxy)-L-threonine + 2-oxoglutarate = (R)-3-hydroxy-2-oxo-4-phosphooxybutanoate + L-glutamate. It functions in the pathway amino-acid biosynthesis; L-serine biosynthesis; L-serine from 3-phospho-D-glycerate: step 2/3. Its pathway is cofactor biosynthesis; pyridoxine 5'-phosphate biosynthesis; pyridoxine 5'-phosphate from D-erythrose 4-phosphate: step 3/5. With respect to regulation, inhibited by high concentration of cysteine and by 3-phosphonooxypyruvate. Not inhibited by serine, threonine, valine, glycine, tryptophan and O-acetyl-L-serine. Involved in the plastidial phosphorylated pathway of serine biosynthesis (PPSB). Catalyzes the reversible conversion of 3-phosphohydroxypyruvate to phosphoserine. In Arabidopsis thaliana (Mouse-ear cress), this protein is Phosphoserine aminotransferase 1, chloroplastic.